Here is a 443-residue protein sequence, read N- to C-terminus: Probable D-serine dehydratase (443 aa).

Lys-118 carries the N6-(pyridoxal phosphate)lysine modification.

This sequence belongs to the serine/threonine dehydratase family. DsdA subfamily. The cofactor is pyridoxal 5'-phosphate.

It catalyses the reaction D-serine = pyruvate + NH4(+). This is Probable D-serine dehydratase from Aeromonas salmonicida (strain A449).